The primary structure comprises 327 residues: Vacuolar protein sorting-associated protein 26A (327 aa).

The tract at residues 306 to 327 (RTNFHQRFESPESQASAEQPEM) is disordered. Ser315 is modified (phosphoserine). Residues 316–327 (PESQASAEQPEM) show a composition bias toward polar residues.

The protein belongs to the VPS26 family. In terms of assembly, component of the heterotrimeric retromer cargo-selective complex (CSC), also described as vacuolar protein sorting subcomplex (VPS), formed by VPS26 (VPS26A or VPS26B), VPS29 and VPS35. The CSC has a highly elongated structure with VPS26 and VPS29 binding independently at opposite distal ends of VPS35 as central platform. The CSC is believed to associate with variable sorting nexins to form functionally distinct retromer complex variants. The originally described retromer complex (also called SNX-BAR retromer) is a pentamer containing the CSC and a heterodimeric membrane-deforming subcomplex formed between SNX1 or SNX2 and SNX5 or SNX6 (also called SNX-BAR subcomplex); the respective CSC and SNX-BAR subcomplexes associate with low affinity. The CSC associates with SNX3 to form a SNX3-retromer complex. The CSC associates with SNX27, the WASH complex and the SNX-BAR subcomplex to form the SNX27-retromer complex. Interacts with VPS29, VPS35, SNX27, SNX1, SNX2, SNX5, SNX6, SNX3, RAB7A, ECPAS, EHD1, WASHC5, SORL1.

It localises to the cytoplasm. The protein resides in the endosome membrane. Its subcellular location is the early endosome. Its function is as follows. Acts as a component of the retromer cargo-selective complex (CSC). The CSC is believed to be the core functional component of retromer or respective retromer complex variants acting to prevent missorting of selected transmembrane cargo proteins into the lysosomal degradation pathway. The recruitment of the CSC to the endosomal membrane involves RAB7A and SNX3. The SNX-BAR retromer mediates retrograde transport of cargo proteins from endosomes to the trans-Golgi network (TGN) and is involved in endosome-to-plasma membrane transport for cargo protein recycling. The SNX3-retromer mediates the retrograde endosome-to-TGN transport of WLS distinct from the SNX-BAR retromer pathway. The SNX27-retromer is believed to be involved in endosome-to-plasma membrane trafficking and recycling of a broad spectrum of cargo proteins. The CSC complex seems to act as recruitment hub for other proteins, such as the WASH complex and TBC1D5. Required for retrograde transport of lysosomal enzyme receptor IGF2R. Required to regulate transcytosis of the polymeric immunoglobulin receptor (pIgR-pIgA). Required for the endosomal localization of WASHC2 (indicative for the WASH complex). Required for the endosomal localization of TBC1D5. Mediates retromer cargo recognition of SORL1 and is involved in trafficking of SORL1 implicated in sorting and processing of APP. Involved in retromer-independent lysosomal sorting of F2R. Involved in recycling of ADRB2. Acts redundantly with VSP26B in SNX-27 mediated endocytic recycling of SLC2A1/GLUT1. Enhances the affinity of SNX27 for PDZ-binding motifs in cargo proteins. The chain is Vacuolar protein sorting-associated protein 26A (Vps26a) from Rattus norvegicus (Rat).